The sequence spans 244 residues: Ribonuclease PH (244 aa).

Residues arginine 87 and 125–127 (GTR) contribute to the phosphate site.

Belongs to the RNase PH family. As to quaternary structure, homohexameric ring arranged as a trimer of dimers.

The catalysed reaction is tRNA(n+1) + phosphate = tRNA(n) + a ribonucleoside 5'-diphosphate. Phosphorolytic 3'-5' exoribonuclease that plays an important role in tRNA 3'-end maturation. Removes nucleotide residues following the 3'-CCA terminus of tRNAs; can also add nucleotides to the ends of RNA molecules by using nucleoside diphosphates as substrates, but this may not be physiologically important. Probably plays a role in initiation of 16S rRNA degradation (leading to ribosome degradation) during starvation. In Synechococcus sp. (strain JA-2-3B'a(2-13)) (Cyanobacteria bacterium Yellowstone B-Prime), this protein is Ribonuclease PH.